The sequence spans 302 residues: Stanniocalcin-2 (302 aa).

Positions 1-24 (MCAERLGQFMTLALVLATFDPARG) are cleaved as a signal peptide. The segment at 23–44 (RGTDATNPPEGPQDRSSQQKGR) is disordered. Asn73 is a glycosylation site (N-linked (GlcNAc...) asparagine). Residues 217-302 (KPPTAPPERQ…EQSEYSDIRR (86 aa)) are disordered. Basic and acidic residues predominate over residues 227–264 (PQVDRTKLSRAHHGEAGHHLPEPSSRETGRGAKGERGS). Residues Ser250 and Ser251 each carry the phosphoserine; by FAM20C modification. A Phosphothreonine; by FAM20C modification is found at Thr254.

Belongs to the stanniocalcin family. As to quaternary structure, homodimer; disulfide-linked. Expressed in a variety of tissues including muscle, heart, pancreas, kidney, spleen, prostate, small intestine, colon and peripheral blood leukocytes.

The protein localises to the secreted. Functionally, has an anti-hypocalcemic action on calcium and phosphate homeostasis. This Homo sapiens (Human) protein is Stanniocalcin-2 (STC2).